The chain runs to 199 residues: MTDLAELGETIKAALPAAVSNASIAFGELTLTVDAAKIVEVVRFLRDDPRCRFISPIDVTAVDYPGRANRFDVVWHFLSPSLNTRIRLRAEASETTQVPSLIDLFPGVDWFEREAYDLYGVIFTGHPDMRRILTDYGFDGHPLRKDFPLSGFVEVRYDDDEKRVVYEPVRLNQEFRKFDFLSPWEGADYPLPGDEKRSE.

The protein belongs to the complex I 30 kDa subunit family. As to quaternary structure, NDH-1 is composed of 14 different subunits. Subunits NuoB, C, D, E, F, and G constitute the peripheral sector of the complex.

The protein localises to the cell inner membrane. The enzyme catalyses a quinone + NADH + 5 H(+)(in) = a quinol + NAD(+) + 4 H(+)(out). NDH-1 shuttles electrons from NADH, via FMN and iron-sulfur (Fe-S) centers, to quinones in the respiratory chain. The immediate electron acceptor for the enzyme in this species is believed to be ubiquinone. Couples the redox reaction to proton translocation (for every two electrons transferred, four hydrogen ions are translocated across the cytoplasmic membrane), and thus conserves the redox energy in a proton gradient. The sequence is that of NADH-quinone oxidoreductase subunit C from Rhodopseudomonas palustris (strain BisB18).